The following is a 360-amino-acid chain: MLVYLAEYLTRFHTGFNVFSYVTFRAILGLLTALMFSLWWGPKLIERLQLMQIGQVVRNDGPESHFSKRGTPTMGGLLILGAIFLSVLLWGDLGSRYVWVMLFVLGSFGMIGFIDDYRKVVRKDTKGLIARWKYILQSLAALIIAFFLYTTAANPGETQLVVPFFKDVMPQLGAVFIVLAYFTIVGSSNAVNLTDGLDGLAIMPTVMVAAAFALIAYLSGHAQFANYLHIPHLPGSGELVIVCTAIVGAGLGFLWFNTYPAQVFMGDVGSLSLGAALGAIAVLVRQEILLVIMGGVFVMETVSVILQVGSYKLRGQRIFRMAPIHHHYELKGWPEPRVIVRFWIISIFLVLLGLATLKLR.

The next 10 membrane-spanning stretches (helical) occupy residues 26–46 (AILG…KLIE), 74–94 (MGGL…GDLG), 97–117 (YVWV…IDDY), 134–154 (YILQ…TAAN), 168–188 (VMPQ…VGSS), 199–219 (GLAI…AYLS), 236–256 (SGEL…FLWF), 263–283 (VFMG…IAVL), 288–308 (ILLV…ILQV), and 338–358 (VIVR…ATLK).

Belongs to the glycosyltransferase 4 family. MraY subfamily. It depends on Mg(2+) as a cofactor.

Its subcellular location is the cell inner membrane. The enzyme catalyses UDP-N-acetyl-alpha-D-muramoyl-L-alanyl-gamma-D-glutamyl-meso-2,6-diaminopimeloyl-D-alanyl-D-alanine + di-trans,octa-cis-undecaprenyl phosphate = di-trans,octa-cis-undecaprenyl diphospho-N-acetyl-alpha-D-muramoyl-L-alanyl-D-glutamyl-meso-2,6-diaminopimeloyl-D-alanyl-D-alanine + UMP. It participates in cell wall biogenesis; peptidoglycan biosynthesis. In terms of biological role, catalyzes the initial step of the lipid cycle reactions in the biosynthesis of the cell wall peptidoglycan: transfers peptidoglycan precursor phospho-MurNAc-pentapeptide from UDP-MurNAc-pentapeptide onto the lipid carrier undecaprenyl phosphate, yielding undecaprenyl-pyrophosphoryl-MurNAc-pentapeptide, known as lipid I. This chain is Phospho-N-acetylmuramoyl-pentapeptide-transferase, found in Shewanella oneidensis (strain ATCC 700550 / JCM 31522 / CIP 106686 / LMG 19005 / NCIMB 14063 / MR-1).